Reading from the N-terminus, the 578-residue chain is Signal peptide peptidase-like 2B (578 aa).

Positions 1–19 (MAAARLAAALLLLAAQVAC) are cleaved as a signal peptide. Over 20–168 (EFGVLRVVSQ…APSEPVMDYN (149 aa)) the chain is Lumenal. The region spanning 61–145 (LRDLSTTQLC…LLSHRDLQDI (85 aa)) is the PA domain. N-linked (GlcNAc...) asparagine glycans are attached at residues Asn91 and Asn123. Residues 169–189 (MVIIFVMAVGTVAIGGYWAGS) traverse the membrane as a helical segment. At 190–216 (HDVKKYMKHKRDDGPEKQEDEAVDVTP) the chain is on the cytoplasmic side. Residues 217 to 237 (VMICVFVVMCCFMLVLLYYFY) form a helical membrane-spanning segment. The Lumenal portion of the chain corresponds to 238–239 (DR). Residues 240-260 (LVYVIIGIFCLASSTGLYSCL) traverse the membrane as a helical segment. The Cytoplasmic segment spans residues 261-286 (APFVRKLPFCTCRVPDNNLPYFHKRP). The chain crosses the membrane as a helical span at residues 287–307 (QARMLLLALFCVTVSVVWGIF). Over 308-312 (RNEDQ) the chain is Lumenal. A helical transmembrane segment spans residues 313–333 (WAWVLQDTLGIAFCLYMLKTI). Topologically, residues 334–341 (RLPTFKAC) are cytoplasmic. A helical membrane pass occupies residues 342 to 362 (TLLLLVLFIYDIFFVFITPFL). Asp352 is a catalytic residue. Topologically, residues 363 to 405 (TKSGNSIMVEVATGPSNSSTHEKLPMVLKVPRLNTSPLSLCDR) are lumenal. The chain crosses the membrane as a helical span at residues 406–426 (PFSLLGFGDILVPGLLVAYCH). Residue Asp414 is part of the active site. At 427–438 (RFDIQVQSSRIY) the chain is on the cytoplasmic side. Residues 439-459 (FVACTIAYGLGLLVTFVALVL) form a helical membrane-spanning segment. Topologically, residues 460-463 (MQRG) are lumenal. The chain crosses the membrane as a helical span at residues 464 to 484 (QPALLYLVPCTLLTSCTVALW). The PAL motif lies at 465 to 467 (PAL). The Cytoplasmic portion of the chain corresponds to 485–578 (RRELGAFWTG…IPVVKPETSA (94 aa)). The disordered stretch occupies residues 502–578 (PQTPWAATQG…IPVVKPETSA (77 aa)). A compositionally biased stretch (low complexity) spans 520–529 (SSLSEQPPSE).

The protein belongs to the peptidase A22B family. As to quaternary structure, monomer. Homodimer. Interacts with ITM2B and TNF. In terms of processing, glycosylated.

It is found in the cell membrane. Its subcellular location is the golgi apparatus membrane. The protein resides in the lysosome membrane. It localises to the endosome membrane. The protein localises to the membrane. Functionally, intramembrane-cleaving aspartic protease (I-CLiP) that cleaves type II membrane signal peptides in the hydrophobic plane of the membrane. Functions in ITM2B and TNF processing. Catalyzes the intramembrane cleavage of the anchored fragment of shed TNF-alpha (TNF), which promotes the release of the intracellular domain (ICD) for signaling to the nucleus. May play a role in the regulation of innate and adaptive immunity. This is Signal peptide peptidase-like 2B from Mus musculus (Mouse).